We begin with the raw amino-acid sequence, 364 residues long: Guanine nucleotide-binding protein alpha-6 subunit (364 aa).

The interval 1–29 (MGAGATGLRGARLSPEERANSSKSRAIDR) is disordered. Gly-2 carries the N-myristoyl glycine lipid modification. A compositionally biased stretch (basic and acidic residues) spans 14–29 (SPEERANSSKSRAIDR). The 324-residue stretch at 40–363 (NRFKILLLGT…NENLRSAGLH (324 aa)) folds into the G-alpha domain. Positions 43-56 (KILLLGTAESGKST) are G1 motif. GTP is bound by residues 48-55 (GTAESGKS), 186-192 (VHCRIST), 211-215 (DVGGQ), 280-283 (NKYD), and Ala-335. Positions 55 and 192 each coordinate Mg(2+). A G2 motif region spans residues 184-192 (DIVHCRIST). The interval 207-216 (FKMVDVGGQR) is G3 motif. The segment at 276–283 (VLFLNKYD) is G4 motif. The G5 motif stretch occupies residues 333–338 (TTATDT).

Belongs to the G-alpha family. G proteins are composed of 3 units; alpha, beta and gamma. The alpha chain contains the guanine nucleotide binding site.

In terms of biological role, guanine nucleotide-binding proteins (G proteins) are involved as modulators or transducers in various transmembrane signaling systems. The protein is Guanine nucleotide-binding protein alpha-6 subunit (gpa-6) of Caenorhabditis elegans.